Reading from the N-terminus, the 545-residue chain is Propane 2-monooxygenase, hydroxylase component large subunit (545 aa).

Fe cation is bound by residues Glu-97, Glu-127, His-130, Glu-192, Glu-226, and His-229.

It belongs to the TmoA/XamoA family. The propane 2-monooxygenase multicomponent enzyme system is composed of an electron transfer component and a monooxygenase component interacting with the effector protein PrmD. The electron transfer component is composed of a reductase (PrmB), and the monooxygenase component is formed by a large subunit (PrmA) and a small subunit (PrmC). Probably requires the presence of the chaperonin-like protein PrmG to ensure a productive folding, resulting of a soluble PrmA, which leads to the active form of PrmABCD. Fe(2+) is required as a cofactor.

It carries out the reaction propane + NADH + O2 + H(+) = propan-2-ol + NAD(+) + H2O. It catalyses the reaction phenol + NADH + O2 + H(+) = hydroquinone + NAD(+) + H2O. Functionally, component of the propane 2-monooxygenase multicomponent enzyme system which is involved in the degradation of propane via the O2-dependent hydroxylation of propane. Under acetone induction, also able to catalyze the oxidation of phenol to yield hydroquinone. This Gordonia sp. (strain TY-5) protein is Propane 2-monooxygenase, hydroxylase component large subunit.